The following is a 144-amino-acid chain: Cytochrome c-type biogenesis protein CcmE (144 aa).

Over 1–7 (MKPRHKR) the chain is Cytoplasmic. Residues 8–28 (ALMIVAALAVIGIAALLILNA) form a helical; Signal-anchor for type II membrane protein membrane-spanning segment. The Extracellular portion of the chain corresponds to 29–144 (LNSNIALYVT…EQAQKNGSAK (116 aa)). Heme contacts are provided by His-121 and Tyr-125.

It belongs to the CcmE/CycJ family.

It is found in the cell membrane. Its function is as follows. Heme chaperone required for the biogenesis of c-type cytochromes. Transiently binds heme delivered by CcmC and transfers the heme to apo-cytochromes in a process facilitated by CcmF and CcmH. This is Cytochrome c-type biogenesis protein CcmE from Polynucleobacter asymbioticus (strain DSM 18221 / CIP 109841 / QLW-P1DMWA-1) (Polynucleobacter necessarius subsp. asymbioticus).